A 524-amino-acid chain; its full sequence is Beta-glucosidase 23 (524 aa).

Positions 1–24 (MVLQKLPLIGLLLLLTIVASPANA) are cleaved as a signal peptide. An a beta-D-glucoside-binding site is contributed by glutamine 54. The N-linked (GlcNAc...) asparagine glycan is linked to asparagine 60. A beta-D-glucoside-binding positions include histidine 157 and 202 to 203 (NE). Glutamate 203 serves as the catalytic Proton donor. Cysteine 222 and cysteine 230 are disulfide-bonded. A beta-D-glucoside-binding residues include tyrosine 346 and glutamate 418. Glutamate 418 acts as the Nucleophile in catalysis. The N-linked (GlcNAc...) asparagine glycan is linked to asparagine 461. Residues tryptophan 468, 475-476 (EW), and phenylalanine 484 each bind a beta-D-glucoside. Asparagine 494 is a glycosylation site (N-linked (GlcNAc...) asparagine). A Prevents secretion from ER motif is present at residues 521 to 524 (KDEL).

The protein belongs to the glycosyl hydrolase 1 family. In terms of assembly, homodimers. Binds to the deubiquitinating enzyme AMSH3. The inactive form interacts with PBP1/JAL30 to form the PYK10 complex, at least composed of PYK10/BGLU23, BGLU21, BGLU22, JAL22, JAL23, PBP1/JAL30, PBP2/JAL31, JAL32, JAL33, JAL34, JAL35, GLL22 and GLL23. Post-translationally, forms interchain disulfide bonds. In terms of tissue distribution, expressed exclusively in roots.

The protein resides in the endoplasmic reticulum lumen. It carries out the reaction Hydrolysis of terminal, non-reducing beta-D-glucosyl residues with release of beta-D-glucose.. With respect to regulation, activated by tissue damage and upon binding to PBP1 or PBP2. Its function is as follows. Beta-D-glucosidase active on scopolin &gt; esculin &gt;&gt; 4-MU-glucoside &gt;&gt; DIMBOA-glucoside. No activity with pNP-glucoside, oNP-glucoside and sinigrin as substrates. May possess beta-D-fucosidase activity. Required for the beneficial interaction with the endophytic fungus P.indica. May participate in the control of root colonization by P.indica by repressing defense responses and modulating other responses required for a mutualistic interaction. The protein is Beta-glucosidase 23 of Arabidopsis thaliana (Mouse-ear cress).